Consider the following 132-residue polypeptide: Small ribosomal subunit protein uS11 (132 aa).

It belongs to the universal ribosomal protein uS11 family. Part of the 30S ribosomal subunit.

Located on the platform of the 30S subunit. This Thermoplasma volcanium (strain ATCC 51530 / DSM 4299 / JCM 9571 / NBRC 15438 / GSS1) protein is Small ribosomal subunit protein uS11.